We begin with the raw amino-acid sequence, 359 residues long: Peptide chain release factor 1 (359 aa).

At glutamine 235 the chain carries N5-methylglutamine. Residues 280–306 (AERQRADSERSADRKSQVGSGDRSERI) are disordered.

It belongs to the prokaryotic/mitochondrial release factor family. Post-translationally, methylated by PrmC. Methylation increases the termination efficiency of RF1.

Its subcellular location is the cytoplasm. Functionally, peptide chain release factor 1 directs the termination of translation in response to the peptide chain termination codons UAG and UAA. The polypeptide is Peptide chain release factor 1 (Rhizobium johnstonii (strain DSM 114642 / LMG 32736 / 3841) (Rhizobium leguminosarum bv. viciae)).